The chain runs to 432 residues: Adenylosuccinate synthetase (432 aa).

Residues 13–19 and 41–43 contribute to the GTP site; these read GDEGKGK and GHT. Aspartate 14 (proton acceptor) is an active-site residue. Mg(2+) contacts are provided by aspartate 14 and glycine 41. IMP contacts are provided by residues 14-17, 39-42, threonine 130, arginine 144, glutamine 225, threonine 240, and arginine 304; these read DEGK and NAGH. Residue histidine 42 is the Proton donor of the active site. 300–306 contacts substrate; it reads ATTGRRR. GTP is bound by residues arginine 306, 332-334, and 415-417; these read KLD and STG.

It belongs to the adenylosuccinate synthetase family. In terms of assembly, homodimer. It depends on Mg(2+) as a cofactor.

The protein localises to the cytoplasm. The catalysed reaction is IMP + L-aspartate + GTP = N(6)-(1,2-dicarboxyethyl)-AMP + GDP + phosphate + 2 H(+). It participates in purine metabolism; AMP biosynthesis via de novo pathway; AMP from IMP: step 1/2. Functionally, plays an important role in the de novo pathway of purine nucleotide biosynthesis. Catalyzes the first committed step in the biosynthesis of AMP from IMP. This is Adenylosuccinate synthetase from Edwardsiella ictaluri (strain 93-146).